Reading from the N-terminus, the 640-residue chain is Threonine--tRNA ligase (640 aa).

Positions methionine 1 to threonine 61 constitute a TGS domain. The catalytic stretch occupies residues aspartate 242 to proline 533. Zn(2+) is bound by residues cysteine 333, histidine 384, and histidine 510.

Belongs to the class-II aminoacyl-tRNA synthetase family. In terms of assembly, homodimer. Zn(2+) is required as a cofactor.

It is found in the cytoplasm. The enzyme catalyses tRNA(Thr) + L-threonine + ATP = L-threonyl-tRNA(Thr) + AMP + diphosphate + H(+). Functionally, catalyzes the attachment of threonine to tRNA(Thr) in a two-step reaction: L-threonine is first activated by ATP to form Thr-AMP and then transferred to the acceptor end of tRNA(Thr). Also edits incorrectly charged L-seryl-tRNA(Thr). This is Threonine--tRNA ligase from Stutzerimonas stutzeri (strain A1501) (Pseudomonas stutzeri).